The sequence spans 121 residues: Large ribosomal subunit protein bL19 (121 aa).

Belongs to the bacterial ribosomal protein bL19 family.

Functionally, this protein is located at the 30S-50S ribosomal subunit interface and may play a role in the structure and function of the aminoacyl-tRNA binding site. This chain is Large ribosomal subunit protein bL19, found in Porphyromonas gingivalis (strain ATCC BAA-308 / W83).